The primary structure comprises 459 residues: MDTIAAISTPMGEGAIAIVRLSGPEAVKIADKMYKGPKGKTLSSAESHTIHYGHIADSTTGRIIEEVMVSVLRAPRTFTREDVIEINCHGGIVTVNQVLQLALREGARLAEPGEFTKRAFLNGRIDLSQAEAVMDLIRAKTDRAMNVAMNQMEGRLSALVRRLRDELLETLAHVEVNIDYPEYDDVEEMTHQLLVEKASGVKKEIEALLRTSEQGKILREGLSTVIIGRPNVGKSSLLNSLVHETKAIVTDIPGTTRDVIEEYVNVRGVPLRLVDTAGIRETEDIVERIGVERSRQVLKEADLILLVLNHSEELSEEDVKLFEAVEGMDVIVIMNKTDLEAKIDAERVKELAKGRPVVTTSLLKEEGIQDLEEAIQSLFYTGAIESGDLTYVSNTRHISILHQAKQAIDDALNGIEQDVPIDMVQIDLTRCWELLGEIIGDAVHESLIDQLFSQFCLGK.

Positions 20, 85, and 124 each coordinate (6S)-5-formyl-5,6,7,8-tetrahydrofolate. Residues G221–Y380 enclose the TrmE-type G domain. N231 is a binding site for K(+). GTP-binding positions include N231–S236, T250–T256, and D275–G278. S235 lines the Mg(2+) pocket. 3 residues coordinate K(+): T250, I252, and T255. A Mg(2+)-binding site is contributed by T256. Residue K459 participates in (6S)-5-formyl-5,6,7,8-tetrahydrofolate binding.

It belongs to the TRAFAC class TrmE-Era-EngA-EngB-Septin-like GTPase superfamily. TrmE GTPase family. As to quaternary structure, homodimer. Heterotetramer of two MnmE and two MnmG subunits. K(+) serves as cofactor.

It is found in the cytoplasm. Its function is as follows. Exhibits a very high intrinsic GTPase hydrolysis rate. Involved in the addition of a carboxymethylaminomethyl (cmnm) group at the wobble position (U34) of certain tRNAs, forming tRNA-cmnm(5)s(2)U34. This chain is tRNA modification GTPase MnmE, found in Bacillus velezensis (strain DSM 23117 / BGSC 10A6 / LMG 26770 / FZB42) (Bacillus amyloliquefaciens subsp. plantarum).